We begin with the raw amino-acid sequence, 332 residues long: MVRIAVDAMGGDFGPYPIIEGTILALKENPNFKAILVGHKEKIQTLIPHKYNNRIEIVHAEDVIRMDEAATEALKRKESSIYKAVELVRTGEAEGVVSAGHSGATMSLATLRIGRLKNVSRPAIATLMPTYKNKKSLVLDVGANVDCKPEHLFEFGVMGEAYATAIMNVDKPKVGLLSNGEEETKGNELTKNAFTMLKSLPTFIGNVEGNNIFDGSVDVIVCDGFTGNIVLKTSEGVADAISKLMKANIKKTPIRMAGALMMKKVFRSLKKEIDYSEYGGAPLIGVKGCTIISHGKSTPKAIKNAIYQAITYIKSDINTKIEKRLEEVTPKG.

This sequence belongs to the PlsX family. In terms of assembly, homodimer. Probably interacts with PlsY.

Its subcellular location is the cytoplasm. It carries out the reaction a fatty acyl-[ACP] + phosphate = an acyl phosphate + holo-[ACP]. The protein operates within lipid metabolism; phospholipid metabolism. Functionally, catalyzes the reversible formation of acyl-phosphate (acyl-PO(4)) from acyl-[acyl-carrier-protein] (acyl-ACP). This enzyme utilizes acyl-ACP as fatty acyl donor, but not acyl-CoA. This chain is Phosphate acyltransferase, found in Nitratiruptor sp. (strain SB155-2).